We begin with the raw amino-acid sequence, 320 residues long: Ribosomal protein L11 methyltransferase (320 aa).

S-adenosyl-L-methionine is bound by residues T165, G186, D208, and N251.

The protein belongs to the methyltransferase superfamily. PrmA family.

It is found in the cytoplasm. The catalysed reaction is L-lysyl-[protein] + 3 S-adenosyl-L-methionine = N(6),N(6),N(6)-trimethyl-L-lysyl-[protein] + 3 S-adenosyl-L-homocysteine + 3 H(+). Functionally, methylates ribosomal protein L11. This chain is Ribosomal protein L11 methyltransferase, found in Limosilactobacillus fermentum (strain NBRC 3956 / LMG 18251) (Lactobacillus fermentum).